The following is a 171-amino-acid chain: uncharacterized protein (171 aa).

A disordered region spans residues 123–171 (CTKRDLRNDPPPAYQPDDPLKDLRKNFEKKEKPTWNDVEKKKNGVFEFH). Residues 140–171 (DPLKDLRKNFEKKEKPTWNDVEKKKNGVFEFH) show a composition bias toward basic and acidic residues.

This is an uncharacterized protein from Caenorhabditis elegans.